A 302-amino-acid polypeptide reads, in one-letter code: Sulfate adenylyltransferase subunit 2 (302 aa).

The segment at 280–302 (RQGRLIDSDQSASMEQKKRQGYF) is disordered.

It belongs to the PAPS reductase family. CysD subfamily. Heterodimer composed of CysD, the smaller subunit, and CysN.

It carries out the reaction sulfate + ATP + H(+) = adenosine 5'-phosphosulfate + diphosphate. It functions in the pathway sulfur metabolism; hydrogen sulfide biosynthesis; sulfite from sulfate: step 1/3. With CysN forms the ATP sulfurylase (ATPS) that catalyzes the adenylation of sulfate producing adenosine 5'-phosphosulfate (APS) and diphosphate, the first enzymatic step in sulfur assimilation pathway. APS synthesis involves the formation of a high-energy phosphoric-sulfuric acid anhydride bond driven by GTP hydrolysis by CysN coupled to ATP hydrolysis by CysD. The polypeptide is Sulfate adenylyltransferase subunit 2 (Shewanella sp. (strain ANA-3)).